The chain runs to 259 residues: Triosephosphate isomerase (259 aa).

A substrate-binding site is contributed by 10–12 (NWK). His102 (electrophile) is an active-site residue. Residue Glu172 is the Proton acceptor of the active site. Residues Gly178, Ser218, and 239 to 240 (GG) contribute to the substrate site.

This sequence belongs to the triosephosphate isomerase family. In terms of assembly, homodimer.

It localises to the cytoplasm. The catalysed reaction is D-glyceraldehyde 3-phosphate = dihydroxyacetone phosphate. The protein operates within carbohydrate biosynthesis; gluconeogenesis. Its pathway is carbohydrate degradation; glycolysis; D-glyceraldehyde 3-phosphate from glycerone phosphate: step 1/1. Involved in the gluconeogenesis. Catalyzes stereospecifically the conversion of dihydroxyacetone phosphate (DHAP) to D-glyceraldehyde-3-phosphate (G3P). This is Triosephosphate isomerase from Leifsonia xyli subsp. xyli (strain CTCB07).